A 274-amino-acid chain; its full sequence is uncharacterized protein (274 aa).

5 helical membrane-spanning segments follow: residues 9-29 (SLLL…VSIL), 64-84 (WFWH…FFIL), 135-155 (LAGH…ALLL), 165-185 (MSSM…WQNA), and 219-239 (IIVY…LVLG).

It belongs to the steroid 5-alpha reductase family.

The protein localises to the endoplasmic reticulum membrane. This is an uncharacterized protein from Schizosaccharomyces pombe (strain 972 / ATCC 24843) (Fission yeast).